The sequence spans 1151 residues: MPNPPSFKSHKQNLFNSNNNQHANSVDSFDLHLDDSFDAALDSLQINNNPEPLSKHNTVGDRESFEMRTVDDLDNFSNHSSDSHRKSSNTDTHPLMYDNRLSQDDNFKFTNIASSPPSSSNNIFSKALSYLKVSNTKNWSKFGSPIELSDQHIEREIHPDTTPVYDRNRYVSNELSNAKYNAVTFVPTLLYEQFKFFYNLYFLVVALSQAVPALRIGYLSSYIVPLAFVLTVTMAKEAIDDIQRRRRDRESNNELYHVITRNRSIPSKDLKVGDLIKVHKGDRIPADLVLLQSSEPSGESFIKTDQLDGETDWKLRVACPLTQNLSENDLINRISITASAPEKSIHKFLGKVTYKDSTSNPLSVDNTLWANTVLASSGFCIACVVYTGRDTRQAMNTTTAKVKTGLLELEINSISKILCACVFALSILLVAFAGFHNDDWYIDILRYLILFSTIIPVSLRVNLDLAKSVYAHQIEHDKTIPETIVRTSTIPEDLGRIEYLLSDKTGTLTQNDMQLKKIHLGTVSYTSETLDIVSDYVQSLVSSKNDSLNNSKVALSTTRKDMSFRVRDMILTLAICHNVTPTFEDDELTYQAASPDEIAIVKFTESVGLSLFKRDRHSISLLHEHSGKTLNYEILQVFPFNSDSKRMGIIVRDEQLDEYWFMQKGADTVMSKIVESNDWLEEETGNMAREGLRTLVIGRKKLNKKIYEQFQKEYNDASLSMLNRDQQMSQVITKYLEHDLELLGLTGVEDKLQKDVKSSIELLRNAGIKIWMLTGDKVETARCVSISAKLISRGQYVHTITKVTRPEGAFNQLEYLKINRNACLLIDGESLGMFLKHYEQEFFDVVVHLPTVIACRCTPQQKADVALVIRKMTGKRVCCIGDGGNDVSMIQCADVGVGIVGKEGKQASLAADFSITQFCHLTELLLWHGRNSYKRSAKLAQFVMHRGLIIAICQAVYSICSLFEPIALYQGWLMVGYATCYTMAPVFSLTLDHDIEESLTKIYPELYKELTEGKSLSYKTFFVWVLLSLFQGSVIQLFSQAFTSLLDTDFTRMVAISFTALVVNELIMVALEIYTWNKTMLVTEIATLLFYIVSVPFLGDYFDLGYMTTVNYYAGLLVILLISIFPVWTAKAIYRRLHPPSYAKVQEFATP.

2 disordered regions span residues 1–21 (MPNP…NNNQ) and 73–95 (LDNF…THPL). The Extracellular portion of the chain corresponds to 1–184 (MPNPPSFKSH…LSNAKYNAVT (184 aa)). Positions 12-21 (QNLFNSNNNQ) are enriched in polar residues. The required for endosome-to-Golgi sorting stretch occupies residues 51-104 (EPLSKHNTVGDRESFEMRTVDDLDNFSNHSSDSHRKSSNTDTHPLMYDNRLSQD). Ser102 is subject to Phosphoserine. The helical transmembrane segment at 185-205 (FVPTLLYEQFKFFYNLYFLVV) threads the bilayer. The Cytoplasmic portion of the chain corresponds to 206 to 209 (ALSQ). A helical transmembrane segment spans residues 210 to 230 (AVPALRIGYLSSYIVPLAFVL). Residues 231–367 (TVTMAKEAID…TSNPLSVDNT (137 aa)) lie on the Extracellular side of the membrane. Residues 368–388 (LWANTVLASSGFCIACVVYTG) traverse the membrane as a helical segment. The Cytoplasmic segment spans residues 389 to 416 (RDTRQAMNTTTAKVKTGLLELEINSISK). The helical transmembrane segment at 417–437 (ILCACVFALSILLVAFAGFHN) threads the bilayer. A topological domain (extracellular) is located at residue Asp438. Residues 439–459 (DWYIDILRYLILFSTIIPVSL) form a helical membrane-spanning segment. Residues 460 to 947 (RVNLDLAKSV…KLAQFVMHRG (488 aa)) are Cytoplasmic-facing. Catalysis depends on Asp503, which acts as the 4-aspartylphosphate intermediate. Positions 503, 504, and 505 each coordinate ATP. Mg(2+) is bound at residue Asp503. Thr505 provides a ligand contact to Mg(2+). Ser551 is modified (phosphoserine). 12 residues coordinate ATP: Glu597, Phe640, Ser642, Lys645, Lys664, Arg693, Thr694, Thr774, Gly775, Asp776, Arg856, and Lys862. Asp882 contributes to the Mg(2+) binding site. The ATP site is built by Asn885 and Asp886. Asp886 serves as a coordination point for Mg(2+). A helical transmembrane segment spans residues 948–968 (LIIAICQAVYSICSLFEPIAL). Over 969-970 (YQ) the chain is Extracellular. The helical transmembrane segment at 971–991 (GWLMVGYATCYTMAPVFSLTL) threads the bilayer. Residues 992 to 1020 (DHDIEESLTKIYPELYKELTEGKSLSYKT) are Cytoplasmic-facing. The chain crosses the membrane as a helical span at residues 1021-1041 (FFVWVLLSLFQGSVIQLFSQA). Over 1042 to 1052 (FTSLLDTDFTR) the chain is Extracellular. A helical transmembrane segment spans residues 1053 to 1073 (MVAISFTALVVNELIMVALEI). The Cytoplasmic portion of the chain corresponds to 1074 to 1078 (YTWNK). The chain crosses the membrane as a helical span at residues 1079 to 1099 (TMLVTEIATLLFYIVSVPFLG). At 1100-1109 (DYFDLGYMTT) the chain is on the extracellular side. A helical membrane pass occupies residues 1110–1130 (VNYYAGLLVILLISIFPVWTA). Over 1131 to 1151 (KAIYRRLHPPSYAKVQEFATP) the chain is Cytoplasmic. Residues 1131–1151 (KAIYRRLHPPSYAKVQEFATP) are required for endosomal targeting.

Belongs to the cation transport ATPase (P-type) (TC 3.A.3) family. Type IV subfamily. As to quaternary structure, interacts with MON2. Interacts with ANY1. Functions without a CDC50/LEM3 family accessory subunit. It depends on Mg(2+) as a cofactor.

It is found in the endosome membrane. The protein resides in the golgi apparatus membrane. It carries out the reaction ATP + H2O + phospholipidSide 1 = ADP + phosphate + phospholipidSide 2.. The enzyme catalyses a 1,2-diacyl-sn-glycero-3-phospho-L-serine(out) + ATP + H2O = a 1,2-diacyl-sn-glycero-3-phospho-L-serine(in) + ADP + phosphate + H(+). The catalysed reaction is a 1,2-diacyl-sn-glycero-3-phosphoethanolamine(out) + ATP + H2O = a 1,2-diacyl-sn-glycero-3-phosphoethanolamine(in) + ADP + phosphate + H(+). Flippase that catalyzes the hydrolysis of ATP coupled to the transport of lysophosphatidylserine, phosphatidylethanolamine, and phosphatidylserine from the lumenal to the cytosolic leaflet of the Golgi apparatus membrane and ensures the maintenance of asymmetric distribution of phospholipids. Does not appear to transport phosphatidylcholine or sphingomyelin. May be involved in recycling from endosomes by driving the formation of SNX3-dependent recycling tubules. Required for COPI retrograde transport from the Golgi to the endoplasmic reticulum, Golgi-endosome trafficking, and Golgi-dependent protein glycosylation. In Saccharomyces cerevisiae (strain ATCC 204508 / S288c) (Baker's yeast), this protein is Phospholipid-transporting ATPase NEO1.